Reading from the N-terminus, the 843-residue chain is Probable disease resistance protein At5g47250 (843 aa).

Residues 28–58 (MLKENLVLLKSAFDELKAEKEDVVNRVNAGE) are a coiled coil. In terms of domain architecture, NB-ARC spans 141–440 (TEQPPPPVVE…GEGFIDEKDG (300 aa)). 183–190 (GMGGVGKT) serves as a coordination point for ATP. LRR repeat units lie at residues 510-531 (TVTKMSLFNNEIKNIPDDPEFP), 535-556 (NLVTLFLQNNRLVDIVGKFFLV), 559-581 (TLVVLDLSWNFQITELPKGISAL), 583-604 (SLRLLNLSGTSIKHLPEGLGVL), and 606-628 (KLIHLNLESTSNLRSVGLISELQ).

It belongs to the disease resistance NB-LRR family.

In terms of biological role, probable disease resistance protein. The chain is Probable disease resistance protein At5g47250 from Arabidopsis thaliana (Mouse-ear cress).